The chain runs to 541 residues: uncharacterized protein (541 aa).

It localises to the virion. This is an uncharacterized protein from Acanthamoeba polyphaga mimivirus (APMV).